We begin with the raw amino-acid sequence, 37 residues long: Large ribosomal subunit protein bL36c (37 aa).

This sequence belongs to the bacterial ribosomal protein bL36 family.

Its subcellular location is the plastid. It is found in the chloroplast. The polypeptide is Large ribosomal subunit protein bL36c (Stigeoclonium helveticum (Green alga)).